Reading from the N-terminus, the 364-residue chain is Succinyl-diaminopimelate desuccinylase (364 aa).

His-66 contacts Zn(2+). Asp-68 is a catalytic residue. Asp-97 contributes to the Zn(2+) binding site. Residue Glu-127 is the Proton acceptor of the active site. Residues Glu-128, Glu-156, and His-341 each contribute to the Zn(2+) site.

This sequence belongs to the peptidase M20A family. DapE subfamily. Homodimer. The cofactor is Zn(2+). Co(2+) is required as a cofactor.

The catalysed reaction is N-succinyl-(2S,6S)-2,6-diaminopimelate + H2O = (2S,6S)-2,6-diaminopimelate + succinate. It participates in amino-acid biosynthesis; L-lysine biosynthesis via DAP pathway; LL-2,6-diaminopimelate from (S)-tetrahydrodipicolinate (succinylase route): step 3/3. In terms of biological role, catalyzes the hydrolysis of N-succinyl-L,L-diaminopimelic acid (SDAP), forming succinate and LL-2,6-diaminopimelate (DAP), an intermediate involved in the bacterial biosynthesis of lysine and meso-diaminopimelic acid, an essential component of bacterial cell walls. This Wolinella succinogenes (strain ATCC 29543 / DSM 1740 / CCUG 13145 / JCM 31913 / LMG 7466 / NCTC 11488 / FDC 602W) (Vibrio succinogenes) protein is Succinyl-diaminopimelate desuccinylase.